The sequence spans 97 residues: Aspartyl/glutamyl-tRNA(Asn/Gln) amidotransferase subunit C (97 aa).

It belongs to the GatC family. In terms of assembly, heterotrimer of A, B and C subunits.

It carries out the reaction L-glutamyl-tRNA(Gln) + L-glutamine + ATP + H2O = L-glutaminyl-tRNA(Gln) + L-glutamate + ADP + phosphate + H(+). The catalysed reaction is L-aspartyl-tRNA(Asn) + L-glutamine + ATP + H2O = L-asparaginyl-tRNA(Asn) + L-glutamate + ADP + phosphate + 2 H(+). Functionally, allows the formation of correctly charged Asn-tRNA(Asn) or Gln-tRNA(Gln) through the transamidation of misacylated Asp-tRNA(Asn) or Glu-tRNA(Gln) in organisms which lack either or both of asparaginyl-tRNA or glutaminyl-tRNA synthetases. The reaction takes place in the presence of glutamine and ATP through an activated phospho-Asp-tRNA(Asn) or phospho-Glu-tRNA(Gln). This Listeria innocua serovar 6a (strain ATCC BAA-680 / CLIP 11262) protein is Aspartyl/glutamyl-tRNA(Asn/Gln) amidotransferase subunit C.